Reading from the N-terminus, the 585-residue chain is Cysteine/serine-rich nuclear protein 3 (585 aa).

Disordered stretches follow at residues 1-52 and 335-395; these read MSGI…TPSS and ELDC…GFVE. Low complexity predominate over residues 30–40; it reads SSESADSGDSV. The span at 41–52 shows a compositional bias: polar residues; it reads NPSTSSHFTPSS. The segment covering 335-349 has biased composition (acidic residues); the sequence is ELDCQGEEEEEEEDG. The segment covering 351–366 has biased composition (polar residues); the sequence is SFCSGVTDSSTQSLAP. A compositionally biased stretch (acidic residues) spans 368 to 389; sequence ESDEEEEEEEEEEEEEDDDDDK.

This sequence belongs to the AXUD1 family.

The protein resides in the nucleus. Its function is as follows. Binds to the consensus sequence 5'-AGAGTG-3' and has transcriptional activator activity. Plays a role in apoptosis. The sequence is that of Cysteine/serine-rich nuclear protein 3 (CSRNP3) from Homo sapiens (Human).